The sequence spans 616 residues: Chaperone protein HscA (616 aa).

This sequence belongs to the heat shock protein 70 family.

Functionally, chaperone involved in the maturation of iron-sulfur cluster-containing proteins. Has a low intrinsic ATPase activity which is markedly stimulated by HscB. Involved in the maturation of IscU. In Escherichia fergusonii (strain ATCC 35469 / DSM 13698 / CCUG 18766 / IAM 14443 / JCM 21226 / LMG 7866 / NBRC 102419 / NCTC 12128 / CDC 0568-73), this protein is Chaperone protein HscA.